A 94-amino-acid polypeptide reads, in one-letter code: uncharacterized protein (94 aa).

Belongs to the phage portal family. HK97 subfamily.

This is an uncharacterized protein from Rickettsia conorii (strain ATCC VR-613 / Malish 7).